The sequence spans 246 residues: Adenosylcobinamide-GDP ribazoletransferase (246 aa).

A run of 6 helical transmembrane segments spans residues 37 to 57 (FPAV…AGAL), 64 to 84 (ALAA…DGLA), 100 to 122 (LLAV…LQLL), 139 to 159 (ALVL…WWLM), 185 to 205 (LAAA…VLWW), and 223 to 243 (AGIE…GLWI).

The protein belongs to the CobS family. Mg(2+) serves as cofactor.

The protein localises to the cell inner membrane. It catalyses the reaction alpha-ribazole + adenosylcob(III)inamide-GDP = adenosylcob(III)alamin + GMP + H(+). The catalysed reaction is alpha-ribazole 5'-phosphate + adenosylcob(III)inamide-GDP = adenosylcob(III)alamin 5'-phosphate + GMP + H(+). The protein operates within cofactor biosynthesis; adenosylcobalamin biosynthesis; adenosylcobalamin from cob(II)yrinate a,c-diamide: step 7/7. Functionally, joins adenosylcobinamide-GDP and alpha-ribazole to generate adenosylcobalamin (Ado-cobalamin). Also synthesizes adenosylcobalamin 5'-phosphate from adenosylcobinamide-GDP and alpha-ribazole 5'-phosphate. In Novosphingobium aromaticivorans (strain ATCC 700278 / DSM 12444 / CCUG 56034 / CIP 105152 / NBRC 16084 / F199), this protein is Adenosylcobinamide-GDP ribazoletransferase.